The primary structure comprises 107 residues: Nucleoid-associated protein Pnuc_0701 (107 aa).

It belongs to the YbaB/EbfC family. In terms of assembly, homodimer.

Its subcellular location is the cytoplasm. It localises to the nucleoid. In terms of biological role, binds to DNA and alters its conformation. May be involved in regulation of gene expression, nucleoid organization and DNA protection. This chain is Nucleoid-associated protein Pnuc_0701, found in Polynucleobacter asymbioticus (strain DSM 18221 / CIP 109841 / QLW-P1DMWA-1) (Polynucleobacter necessarius subsp. asymbioticus).